The sequence spans 226 residues: UPF0758 protein SPs0978 (226 aa).

Positions Ser-103 to Leu-225 constitute an MPN domain. Residues His-174, His-176, and Asp-187 each coordinate Zn(2+). The JAMM motif signature appears at His-174 to Asp-187.

This sequence belongs to the UPF0758 family.

This Streptococcus pyogenes serotype M3 (strain SSI-1) protein is UPF0758 protein SPs0978.